The primary structure comprises 246 residues: Envelope glycoprotein gp95 (246 aa).

At 1-192 the chain is on the extracellular side; that stretch reads IPSRPVGGPC…EWAVHLLKGL (192 aa). Residue Asn-31 is glycosylated (N-linked (GlcNAc...) asparagine; by host). The cysteines at positions 50 and 86 are disulfide-linked. Positions 58–78 are fusion peptide; the sequence is GPTARIFASILAPGVAAAQAL. The stretch at 75 to 125 forms a coiled coil; it reads AQALREIERLACWSVKQANLTTSLLGDLLDDVTSIRHAVLQNRAAIDFLLL. N-linked (GlcNAc...) asparagine; by host glycosylation is present at Asn-93. The tract at residues 114-130 is immunosuppression; it reads LQNRAAIDFLLLAHGHG. Cys-131 and Cys-138 are oxidised to a cystine. Residue Asn-141 is glycosylated (N-linked (GlcNAc...) asparagine; by host). Positions 143 to 173 form a coiled coil; sequence SDQSESIQKKFQLMKEHVNKIGVDSDLIGSW. A helical membrane pass occupies residues 193-213; the sequence is LLGLVVILLLVVCLPCLLQML. Residues Cys-205 and Cys-208 are each lipidated (S-palmitoyl cysteine; by host). Over 214-246 the chain is Cytoplasmic; sequence CGNRRKMINNSISYHTEYKKLQKACGQPESRIV.

It belongs to the Alpharetroviruses envelope glycoprotein family. In terms of assembly, heterodimer with the transmembrane protein. The mature envelope protein (Env) consists of a trimer of SU-TM heterodimers attached by a labile interchain disulfide bond. Interacts with the host cell entry receptor TVA isoforms pg900 and pg800; this interaction allows the viral attachment. Heterodimer with the surface protein. The mature envelope protein (Env) consists of a trimer of SU-TM heterodimers attached by a labile interchain disulfide bond. Specific enzymatic cleavages in vivo yield mature proteins. Envelope glycoproteins are synthesized as an inactive precursor that is N-glycosylated and processed likely by host cell furin or by a furin-like protease in the Golgi to yield the mature SU and TM proteins. The cleavage site between SU and TM requires the minimal sequence [KR]-X-[KR]-R. In terms of processing, the transmembrane protein is palmitoylated. Palmitoylation is necessary for glycoprotein function and infectivity.

Its subcellular location is the virion membrane. The protein localises to the host cell membrane. In terms of biological role, the surface protein (SU) attaches the virus to the host cell entry receptor TVA. This interaction triggers the refolding of the transmembrane protein (TM) thereby unmasking its fusion peptide and the formation of a reactive thiolate to activate its fusogenic potential. Fusion occurs at the host cell plasma membrane. The transmembrane protein (TM) acts as a class I viral fusion protein. Under the current model, the protein has at least 3 conformational states: pre-fusion native state, pre-hairpin intermediate state, and post-fusion hairpin state. During viral and target cell membrane fusion, the coiled coil regions (heptad repeats) assume a trimer-of-hairpins structure, positioning the fusion peptide in close proximity to the C-terminal region of the ectodomain. The formation of this structure appears to drive apposition and subsequent fusion of viral and target cell membranes. Membranes fusion leads to delivery of the nucleocapsid into the cytoplasm. The protein is Envelope glycoprotein gp95 (env) of Rous sarcoma virus subgroup A (strain Schmidt-Ruppin) (RSV-SR-A).